We begin with the raw amino-acid sequence, 196 residues long: Imidazole glycerol phosphate synthase subunit HisH (196 aa).

The 195-residue stretch at 2–196 (KVVILDTGCA…AQLLKNFLEM (195 aa)) folds into the Glutamine amidotransferase type-1 domain. The active-site Nucleophile is the cysteine 77. Catalysis depends on residues histidine 178 and glutamate 180.

Heterodimer of HisH and HisF.

The protein resides in the cytoplasm. It catalyses the reaction 5-[(5-phospho-1-deoxy-D-ribulos-1-ylimino)methylamino]-1-(5-phospho-beta-D-ribosyl)imidazole-4-carboxamide + L-glutamine = D-erythro-1-(imidazol-4-yl)glycerol 3-phosphate + 5-amino-1-(5-phospho-beta-D-ribosyl)imidazole-4-carboxamide + L-glutamate + H(+). It carries out the reaction L-glutamine + H2O = L-glutamate + NH4(+). It functions in the pathway amino-acid biosynthesis; L-histidine biosynthesis; L-histidine from 5-phospho-alpha-D-ribose 1-diphosphate: step 5/9. Its function is as follows. IGPS catalyzes the conversion of PRFAR and glutamine to IGP, AICAR and glutamate. The HisH subunit catalyzes the hydrolysis of glutamine to glutamate and ammonia as part of the synthesis of IGP and AICAR. The resulting ammonia molecule is channeled to the active site of HisF. The polypeptide is Imidazole glycerol phosphate synthase subunit HisH (Pectobacterium atrosepticum (strain SCRI 1043 / ATCC BAA-672) (Erwinia carotovora subsp. atroseptica)).